We begin with the raw amino-acid sequence, 472 residues long: UDP-N-acetylmuramate--L-alanine ligase (472 aa).

Residue Gly-122–Thr-128 coordinates ATP.

Belongs to the MurCDEF family.

The protein resides in the cytoplasm. The enzyme catalyses UDP-N-acetyl-alpha-D-muramate + L-alanine + ATP = UDP-N-acetyl-alpha-D-muramoyl-L-alanine + ADP + phosphate + H(+). It participates in cell wall biogenesis; peptidoglycan biosynthesis. In terms of biological role, cell wall formation. The chain is UDP-N-acetylmuramate--L-alanine ligase from Prochlorococcus marinus (strain SARG / CCMP1375 / SS120).